Reading from the N-terminus, the 237-residue chain is MADDWEFAADSKVVVKPNAANNINKWEGEDDDEDVKESWEDEEEKKDEEKPTKTEAPAKTKPNKVLKAKLLEQECLEKEEEAKRLANMSTEEKLAEKLRLQKIQEESDLKSALETFGLTSIDGGLDSFNPQSNEEFKEFGATLSWKIAQYKESPHFPQFIEDLVQALCVNLSTADLKKVKMSVEVLHSEKLKMEKVSVKNKGAAKNRGKATLRTENDDIDVYQKYGDDFTDDYDDFM.

Positions alanine 20 to lysine 64 are disordered. Residues glycine 28–lysine 46 are compositionally biased toward acidic residues. The span at aspartate 47–alanine 58 shows a compositional bias: basic and acidic residues. Positions asparagine 63–threonine 115 form a coiled coil.

The protein belongs to the eIF-3 subunit J family. Component of the eukaryotic translation initiation factor 3 (eIF-3) complex. The eIF-3 complex interacts with pix.

The protein localises to the cytoplasm. Its function is as follows. Component of the eukaryotic translation initiation factor 3 (eIF-3) complex, which is involved in protein synthesis of a specialized repertoire of mRNAs and, together with other initiation factors, stimulates binding of mRNA and methionyl-tRNAi to the 40S ribosome. The eIF-3 complex specifically targets and initiates translation of a subset of mRNAs involved in cell proliferation. The polypeptide is Eukaryotic translation initiation factor 3 subunit J (Drosophila grimshawi (Hawaiian fruit fly)).